The following is a 301-amino-acid chain: D-alanine--D-alanine ligase (301 aa).

One can recognise an ATP-grasp domain in the interval K99–Q294. I126–T181 is an ATP binding site. The Mg(2+) site is built by D248, E261, and N263.

It belongs to the D-alanine--D-alanine ligase family. The cofactor is Mg(2+). It depends on Mn(2+) as a cofactor.

Its subcellular location is the cytoplasm. It carries out the reaction 2 D-alanine + ATP = D-alanyl-D-alanine + ADP + phosphate + H(+). Its pathway is cell wall biogenesis; peptidoglycan biosynthesis. Functionally, cell wall formation. The chain is D-alanine--D-alanine ligase from Clostridium beijerinckii (strain ATCC 51743 / NCIMB 8052) (Clostridium acetobutylicum).